The chain runs to 70 residues: ATP synthase subunit c (70 aa).

The next 2 helical transmembrane spans lie at 3 to 23 (ALAAGIAMLAGLGVGIGIGIA) and 44 to 64 (LFLIGAALAEAVAIYSLVIAF).

This sequence belongs to the ATPase C chain family. As to quaternary structure, F-type ATPases have 2 components, F(1) - the catalytic core - and F(0) - the membrane proton channel. F(1) has five subunits: alpha(3), beta(3), gamma(1), delta(1), epsilon(1). F(0) has three main subunits: a(1), b(2) and c(10-14). The alpha and beta chains form an alternating ring which encloses part of the gamma chain. F(1) is attached to F(0) by a central stalk formed by the gamma and epsilon chains, while a peripheral stalk is formed by the delta and b chains.

It is found in the cell membrane. Its function is as follows. F(1)F(0) ATP synthase produces ATP from ADP in the presence of a proton or sodium gradient. F-type ATPases consist of two structural domains, F(1) containing the extramembraneous catalytic core and F(0) containing the membrane proton channel, linked together by a central stalk and a peripheral stalk. During catalysis, ATP synthesis in the catalytic domain of F(1) is coupled via a rotary mechanism of the central stalk subunits to proton translocation. Key component of the F(0) channel; it plays a direct role in translocation across the membrane. A homomeric c-ring of between 10-14 subunits forms the central stalk rotor element with the F(1) delta and epsilon subunits. The chain is ATP synthase subunit c from Caldicellulosiruptor bescii (strain ATCC BAA-1888 / DSM 6725 / KCTC 15123 / Z-1320) (Anaerocellum thermophilum).